Consider the following 651-residue polypeptide: Acetyl-coenzyme A synthetase (651 aa).

CoA-binding positions include 191–194, Thr311, and Asn335; that span reads RGGK. ATP-binding positions include 387 to 389, 411 to 416, Asp500, and Arg515; these read GEP and DTWWQT. Ser523 contacts CoA. Residue Arg526 coordinates ATP. Mg(2+) is bound by residues Val537, His539, and Val542. Arg584 is a binding site for CoA. At Lys609 the chain carries N6-acetyllysine.

It belongs to the ATP-dependent AMP-binding enzyme family. It depends on Mg(2+) as a cofactor. Acetylated. Deacetylation by the SIR2-homolog deacetylase activates the enzyme.

It carries out the reaction acetate + ATP + CoA = acetyl-CoA + AMP + diphosphate. Catalyzes the conversion of acetate into acetyl-CoA (AcCoA), an essential intermediate at the junction of anabolic and catabolic pathways. AcsA undergoes a two-step reaction. In the first half reaction, AcsA combines acetate with ATP to form acetyl-adenylate (AcAMP) intermediate. In the second half reaction, it can then transfer the acetyl group from AcAMP to the sulfhydryl group of CoA, forming the product AcCoA. This Stutzerimonas stutzeri (strain A1501) (Pseudomonas stutzeri) protein is Acetyl-coenzyme A synthetase.